The chain runs to 2768 residues: Thyroglobulin (2768 aa).

The N-terminal stretch at 1 to 20 (MMTLVLWVSTLLSSVCLVAA) is a signal peptide. Position 25 is an iodotyrosine; alternate (Tyr25). The residue at position 25 (Tyr25) is a Sulfotyrosine; alternate. Thyroxine; alternate is present on Tyr25. At Tyr25 the chain carries Triiodothyronine; alternate. Thyroglobulin type-1 domains are found at residues 32–93 (LRPC…PTAC), 94–161 (LSFC…PTRC), 162–298 (PRSC…RFRC), and 299–359 (PTKC…PLFC). 8 disulfide bridges follow: Cys35–Cys53, Cys64–Cys71, Cys73–Cys93, Cys97–Cys121, Cys132–Cys139, Cys141–Cys161, Cys165–Cys184, and Cys195–Cys236. Tyr109 is modified (iodotyrosine). A glycan (N-linked (GlcNAc...) asparagine) is linked at Asn111. An Iodotyrosine; alternate modification is found at Tyr150. Tyr150 is subject to Diiodotyrosine; alternate. The N-linked (GlcNAc...) asparagine glycan is linked to Asn199. Iodotyrosine occurs at positions 235 and 259. Cystine bridges form between Cys302/Cys320, Cys331/Cys337, Cys339/Cys365, Cys408/Cys608, Cys631/Cys636, Cys638/Cys658, Cys662/Cys687, and Cys698/Cys703. Residues Asn484, Asn496, and Asn545 are each glycosylated (N-linked (GlcNAc...) asparagine). Thyroglobulin type-1 domains follow at residues 605–658 (AQAC…HPRC), 659–726 (PTKC…PKLC), 727–922 (PSVC…IPAC), 923–1074 (PGPC…MPQC), 1075–1146 (PTSC…SAQC), and 1147–1211 (PGLC…QPAC). The residue at position 704 (Tyr704) is an Iodotyrosine; alternate. The residue at position 704 (Tyr704) is a Thyroxine; alternate. Tyr704 is subject to Triiodothyronine; alternate. Residue Tyr704 is modified to Diiodotyrosine; alternate. 16 cysteine pairs are disulfide-bonded: Cys705/Cys726, Cys730/Cys763, Cys774/Cys899, Cys901/Cys922, Cys926/Cys1032, Cys1043/Cys1050, Cys1052/Cys1074, Cys1078/Cys1109, Cys1127/Cys1146, Cys1150/Cys1170, Cys1182/Cys1189, Cys1191/Cys1211, Cys1216/Cys1265, Cys1232/Cys1246, Cys1306/Cys1356, and Cys1331/Cys1347. Asn748 is a glycosylation site (N-linked (GlcNAc...) asparagine). Tyr785 is modified (iodotyrosine). N-linked (GlcNAc...) asparagine glycosylation occurs at Asn817. An Iodotyrosine; alternate modification is found at Tyr867. Tyr867 bears the Diiodotyrosine; alternate mark. Tyr884 bears the Diiodotyrosine mark. Residue Asn948 is glycosylated (N-linked (GlcNAc...) asparagine). Residue Tyr993 is modified to Iodotyrosine; alternate. Residue Tyr993 is modified to Diiodotyrosine; alternate. N-linked (GlcNAc...) asparagine glycosylation occurs at Asn1017. N-linked (GlcNAc...) asparagine glycosylation is present at Asn1141. Tyr1310 bears the Iodotyrosine mark. The residue at position 1310 (Tyr1310) is a Thyroxine. N-linked (GlcNAc...) asparagine glycans are attached at residues Asn1349 and Asn1365. 9 cysteine pairs are disulfide-bonded: Cys1441–Cys1458, Cys1461–Cys1472, Cys1475–Cys1489, Cys1492–Cys1509, Cys1513–Cys1522, Cys1542–Cys1564, Cys1602–Cys1626, Cys1606–Cys1612, and Cys1638–Cys1661. Type II repeat units lie at residues 1455–1468 (PLGCVKCPEGSFSQ), 1469–1485 (DGKCTPCPAGTYQGQAG), and 1486–1502 (SSACIPCPRGRTTTITG). The region spanning 1510–1564 (VTDCQRDEAGLQCDQNGQYQANQKDMDSGEVFCVDSEGQRLQWLQTEAGLSESQC) is the Thyroglobulin type-1 11 domain. One copy of the Type IIIA repeat lies at 1602-1722 (CLADCADDEA…GTNLTDTHLF (121 aa)). N-linked (GlcNAc...) asparagine glycosylation is present at Asn1715. 4 disulfides stabilise this stretch: Cys1723-Cys1748, Cys1727-Cys1733, Cys1732-Cys1834, and Cys1759-Cys1776. A Type IIIB repeat occupies 1723 to 1891 (CLLACDQDSC…LFSAEQANLW (169 aa)). Residues Asn1773 and Asn1866 are each glycosylated (N-linked (GlcNAc...) asparagine). 7 cysteine pairs are disulfide-bonded: Cys1892–Cys1918, Cys1896–Cys1903, Cys1927–Cys1938, Cys1995–Cys2023, Cys1999–Cys2005, Cys2004–Cys2075, and Cys2034–Cys2047. A Type IIIA repeat occupies 1892–1994 (CLSRCAQEPV…EKLISNGFFE (103 aa)). Asn1937 is a glycosylation site (N-linked (GlcNAc...) asparagine). Residues 1995 to 2127 (CERLCDRDPC…SATRNFSLAQ (133 aa)) form a Type IIIB repeat. Asn2012 is a glycosylation site (N-linked (GlcNAc...) asparagine). Asn2122 is a glycosylation site (N-linked (GlcNAc...) asparagine). The Type IIIA repeat unit spans residues 2128-2185 (DFCLQECSRHQDCLVTTLQIQQGVVRCVFYPDIQSCEHSLRSKTCWLLLHEEAAYIYR). Cystine bridges form between Cys2130/Cys2154, Cys2134/Cys2140, and Cys2163/Cys2172. An Iodotyrosine modification is found at Tyr2184. A cholinesterase-like (ChEL) region spans residues 2188 to 2768 (GAPLHQSDGI…LEPVPKSYSK (581 aa)). Asn2251 carries an N-linked (GlcNAc...) asparagine glycan. Cysteines 2265 and 2282 form a disulfide. Asn2296 and Asn2445 each carry an N-linked (GlcNAc...) asparagine glycan. Cys2443 and Cys2454 are oxidised to a cystine. Residue Tyr2541 is modified to Thyroxine. Tyr2574 is modified (iodotyrosine; alternate). Residue Tyr2574 is modified to Thyroxine; alternate. The residue at position 2574 (Tyr2574) is a Triiodothyronine; alternate. Residue Tyr2574 is modified to Diiodotyrosine; alternate. The N-linked (GlcNAc...) asparagine glycan is linked to Asn2583. Residues Tyr2588 and Tyr2618 each carry the iodotyrosine modification. Residues Cys2592 and Cys2716 are joined by a disulfide bond. Tyr2698 carries the post-translational modification Diiodotyrosine. The tract at residues 2731-2768 (GAKDAQLTKSGEEDLEVGPGSEEDFSGSLEPVPKSYSK) is disordered. The segment covering 2743 to 2755 (EDLEVGPGSEEDF) has biased composition (acidic residues). Residue Tyr2766 is modified to Iodotyrosine; alternate. Position 2766 is a thyroxine; alternate (Tyr2766). Tyr2766 carries the triiodothyronine; alternate modification. Tyr2766 carries the diiodotyrosine; alternate modification.

It belongs to the type-B carboxylesterase/lipase family. As to quaternary structure, monomer. Homodimer (via ChEL region); occurs in the endoplasmic reticulum and is required for export to the Golgi apparatus. Homooligomer; disulfide-linked; stored in this form in the thyroid follicle lumen. Iodinated on tyrosine residues by TPO. There are 4 pairs of iodinated tyrosines used for coupling: acceptor Tyr-25 is coupled to donor Tyr-150 or Tyr-235, acceptor Tyr-2574 is coupled to donor Tyr-2541, acceptor Tyr-2766 in monomer 1 is coupled to donor Tyr-2766 in monomer 2 and acceptor Tyr-1310 in monomer 1 is coupled to donor Tyr-109 in monomer 2. Post-translationally, sulfated tyrosines are desulfated during iodination. In terms of processing, undergoes sequential proteolysis by cathepsins to release thyroxine (T4) and triiodothyronine (T3) hormones. In the thyroid follicle lumen, cross-linked TG (storage form) is solubilized by limited proteolysis mediated by cathepsins CTSB and/or CTSL. Partially cleaved TG is further processed by CTSK/cathepsin K and/or CTSL resulting in the release of thyroxine (T4). Following endocytosis, further processing occurs leading to the release of triiodothyronine (T3) and more T4 hormones. Specifically expressed in the thyroid gland.

The protein resides in the secreted. Its function is as follows. Acts as a substrate for the production of iodinated thyroid hormones thyroxine (T4) and triiodothyronine (T3). The synthesis of T3 and T4 involves iodination of selected tyrosine residues of TG/thyroglobulin followed by their oxidative coupling. Following TG re-internalization and lysosomal-mediated proteolysis, T3 and T4 are released from the polypeptide backbone leading to their secretion into the bloodstream. One dimer produces 7 thyroid hormone molecules. This is Thyroglobulin (Tg) from Rattus norvegicus (Rat).